The sequence spans 317 residues: uncharacterized protein (317 aa).

The next 7 helical transmembrane spans lie at 18 to 38 (WWIISLVVAFLPLGLHGLIII), 58 to 78 (IIFGWLLFFFWFNIVVNGFIF), 92 to 112 (FLGHFIYSGGEQFGGVSWWSV), 130 to 150 (LFATSFLLTASTSIYELAFGV), 165 to 185 (QPLSILFALVFKLLPIVKGEL), 202 to 222 (LAFLNPVKLKTLFIPVLLSTV), and 253 to 273 (LWGGIVFLGLFVLLSCLLMVN).

This sequence belongs to the CbiQ family.

The protein resides in the cell membrane. This is an uncharacterized protein from Mycoplasma pneumoniae (strain ATCC 29342 / M129 / Subtype 1) (Mycoplasmoides pneumoniae).